The primary structure comprises 184 residues: Cytosolic Prostaglandin E synthase (184 aa).

Residues 7 to 96 (LIPPPVSWAQ…AAGPYWSSLT (90 aa)) form the CS domain. The disordered stretch occupies residues 115 to 184 (ESDDEEGDQK…EGDKEKKPAA (70 aa)). 5 positions are modified to phosphoserine: serine 116, serine 127, serine 135, serine 156, and serine 162. Residues 147-158 (FNVDDEEEDSDD) show a composition bias toward acidic residues. Residues 175–184 (EGDKEKKPAA) show a composition bias toward basic and acidic residues.

Belongs to the p23/wos2 family.

Its subcellular location is the cytoplasm. The enzyme catalyses prostaglandin H2 = prostaglandin E2. Its function is as follows. Cytosolic prostaglandin synthase that catalyzes the oxidoreduction of prostaglandin endoperoxide H2 (PGH2) to prostaglandin E2 (PGE2). Through production of PGE2 may regulate the activity of non-muscle myosin II in an autocrine or paracrine fashion; this may influence border cell and nurse cell stiffness to facilitate border cell migration during oogenesis. In Drosophila melanogaster (Fruit fly), this protein is Cytosolic Prostaglandin E synthase.